We begin with the raw amino-acid sequence, 108 residues long: Ig kappa chain V region BS-5 (108 aa).

The interval 1–23 is framework-1; the sequence is DVVMTQTPASVSEPVGGTVTIKC. Intrachain disulfides connect cysteine 23–cysteine 88 and cysteine 80–glycine 108. A complementarity-determining-1 region spans residues 24-34; that stretch reads QASQSIYSNLA. The tract at residues 35–49 is framework-2; the sequence is WYQZKPGQPPKLLIY. Positions 50-56 are complementarity-determining-2; that stretch reads KASTLES. Positions 57 to 88 are framework-3; the sequence is GVPSRFKGSGSGTDFTLTISDLECADAATYFC. Residues 89–97 are complementarity-determining-3; it reads QGSBYTGTV. Positions 98 to 107 are framework-4; that stretch reads FGGGTEVVVK.

The protein is Ig kappa chain V region BS-5 of Oryctolagus cuniculus (Rabbit).